The sequence spans 281 residues: Putative rRNA methyltransferase YqxC (281 aa).

The S4 RNA-binding domain maps to 6–67 (ERLDVLLVER…NPLRYVSRGG (62 aa)).

This sequence belongs to the TlyA family.

In Bacillus subtilis (strain 168), this protein is Putative rRNA methyltransferase YqxC (yqxC).